A 208-amino-acid chain; its full sequence is Thymidylate kinase (208 aa).

Residue 10–17 (GPEGSGKT) participates in ATP binding.

Belongs to the thymidylate kinase family.

It carries out the reaction dTMP + ATP = dTDP + ADP. In terms of biological role, phosphorylation of dTMP to form dTDP in both de novo and salvage pathways of dTTP synthesis. This is Thymidylate kinase from Bacillus cereus (strain Q1).